A 117-amino-acid chain; its full sequence is DNA-directed RNA polymerase II subunit RPB11 (117 aa).

This sequence belongs to the archaeal Rpo11/eukaryotic RPB11/RPC19 RNA polymerase subunit family. Component of the RNA polymerase II (Pol II) complex consisting of 12 subunits.

Its subcellular location is the nucleus. In terms of biological role, DNA-dependent RNA polymerase catalyzes the transcription of DNA into RNA using the four ribonucleoside triphosphates as substrates. Component of RNA polymerase II which synthesizes mRNA precursors and many functional non-coding RNAs. Pol II is the central component of the basal RNA polymerase II transcription machinery. It is composed of mobile elements that move relative to each other. RPB11 is part of the core element with the central large cleft. The sequence is that of DNA-directed RNA polymerase II subunit RPB11 from Drosophila melanogaster (Fruit fly).